A 181-amino-acid polypeptide reads, in one-letter code: MKMLLLLLCLGLTLVCVHAEEASSTGRNFNVEKINGEWHTIILASDKREKIEDNGNFRLFLEQIHVLENSLVLKFHTVRDEECSELSMVADKTEKAGEYSVTYDGFNTFTIPKTDYDNFLMAHLINEKDGETFQLMGLYGREPDLSSDIKERFAQLCEEHGILRENIIDLSNANRCLQARE.

A signal peptide spans 1–19 (MKMLLLLLCLGLTLVCVHA). C83 and C176 form a disulfide bridge.

Belongs to the calycin superfamily. Lipocalin family.

The protein localises to the secreted. Its function is as follows. Major urinary proteins (Mups) bind pheromones, and thus stabilize them to allow slow release into the air from urine marks. May protect pheromones from oxidation. May also act as pheromones themselves. In this context, they play a role in the regulation of social behaviors, such as aggression, mating, pup-suckling, territory establishment and dominance. Binds the pheromone analog 2-sec-butyl-4,5-dihydrothiazole (SBT) in vitro. This chain is Major urinary protein 11, found in Mus musculus (Mouse).